The primary structure comprises 443 residues: Probable D-serine dehydratase (443 aa).

Lys116 bears the N6-(pyridoxal phosphate)lysine mark.

It belongs to the serine/threonine dehydratase family. DsdA subfamily. The cofactor is pyridoxal 5'-phosphate.

The catalysed reaction is D-serine = pyruvate + NH4(+). The polypeptide is Probable D-serine dehydratase (Bacillus cereus (strain B4264)).